A 477-amino-acid polypeptide reads, in one-letter code: Stromelysin-1 (477 aa).

An N-terminal signal peptide occupies residues Met-1 to Ser-17. A propeptide spans Tyr-18–Gly-99 (activation peptide). Positions Pro-90–Val-97 match the Cysteine switch motif. Cys-92 provides a ligand contact to Zn(2+). Positions 124 and 158 each coordinate Ca(2+). The Zn(2+) site is built by His-168 and Asp-170. Ca(2+) is bound by residues Asp-175, Gly-176, Gly-178, and Val-180. Zn(2+) is bound at residue His-183. Ca(2+) contacts are provided by Gly-190, Asn-192, and Asp-194. Zn(2+) is bound at residue His-196. Residues Asp-198, Asp-199, and Glu-201 each contribute to the Ca(2+) site. His-218 serves as a coordination point for Zn(2+). The active site involves Glu-219. Zn(2+) is bound by residues His-222 and His-228. 4 Hemopexin repeats span residues Ser-287 to Leu-336, Pro-337 to Ala-383, Val-385 to Val-433, and Asp-434 to Cys-477. Cys-290 and Cys-477 are disulfide-bonded. Residue Asp-297 participates in Ca(2+) binding. Ca(2+) contacts are provided by Asp-389 and Asp-438.

Belongs to the peptidase M10A family. The cofactor is Ca(2+). It depends on Zn(2+) as a cofactor.

It localises to the secreted. The protein localises to the extracellular space. It is found in the extracellular matrix. It catalyses the reaction Preferential cleavage where P1', P2' and P3' are hydrophobic residues.. In terms of biological role, metalloproteinase with a rather broad substrate specificity that can degrade fibronectin, laminin, gelatins of type I, III, IV, and V; collagens III, IV, X, and IX, and cartilage proteoglycans. Activates different molecules including growth factors, plasminogen or other matrix metalloproteinases such as MMP9. Once released into the extracellular matrix (ECM), the inactive pro-enzyme is activated by the plasmin cascade signaling pathway. Also acts intracellularly. For example, in dopaminergic neurons, gets activated by the serine protease HTRA2 upon stress and plays a pivotal role in DA neuronal degeneration by mediating microglial activation and alpha-synuclein/SNCA cleavage. In addition, plays a role in immune response and possesses antiviral activity against various viruses. Mechanistically, translocates from the cytoplasm into the cell nucleus upon virus infection to influence NF-kappa-B activities. This Mus musculus (Mouse) protein is Stromelysin-1 (Mmp3).